A 155-amino-acid chain; its full sequence is Large ribosomal subunit protein uL22c (155 aa).

This sequence belongs to the universal ribosomal protein uL22 family. In terms of assembly, part of the 50S ribosomal subunit.

It is found in the plastid. Its subcellular location is the chloroplast. In terms of biological role, this protein binds specifically to 23S rRNA. Functionally, the globular domain of the protein is located near the polypeptide exit tunnel on the outside of the subunit, while an extended beta-hairpin is found that lines the wall of the exit tunnel in the center of the 70S ribosome. The chain is Large ribosomal subunit protein uL22c (rpl22) from Solanum tuberosum (Potato).